We begin with the raw amino-acid sequence, 356 residues long: UDP-N-acetylglucosamine--N-acetylmuramyl-(pentapeptide) pyrophosphoryl-undecaprenol N-acetylglucosamine transferase (356 aa).

Positions 198 and 289 each coordinate UDP-N-acetyl-alpha-D-glucosamine.

It belongs to the glycosyltransferase 28 family. MurG subfamily.

It localises to the cell membrane. It carries out the reaction Mur2Ac(oyl-L-Ala-gamma-D-Glu-L-Lys-D-Ala-D-Ala)-di-trans,octa-cis-undecaprenyl diphosphate + UDP-N-acetyl-alpha-D-glucosamine = beta-D-GlcNAc-(1-&gt;4)-Mur2Ac(oyl-L-Ala-gamma-D-Glu-L-Lys-D-Ala-D-Ala)-di-trans,octa-cis-undecaprenyl diphosphate + UDP + H(+). It participates in cell wall biogenesis; peptidoglycan biosynthesis. Functionally, cell wall formation. Catalyzes the transfer of a GlcNAc subunit on undecaprenyl-pyrophosphoryl-MurNAc-pentapeptide (lipid intermediate I) to form undecaprenyl-pyrophosphoryl-MurNAc-(pentapeptide)GlcNAc (lipid intermediate II). This chain is UDP-N-acetylglucosamine--N-acetylmuramyl-(pentapeptide) pyrophosphoryl-undecaprenol N-acetylglucosamine transferase, found in Streptococcus thermophilus (strain ATCC BAA-491 / LMD-9).